The chain runs to 218 residues: Transmembrane gamma-carboxyglutamic acid protein 1 (218 aa).

Positions Met1–Arg20 are excised as a propeptide. In terms of domain architecture, Gla spans Arg20 to Lys66. Residues Ala21 to Gln80 lie on the Extracellular side of the membrane. Cys37 and Cys42 are disulfide-bonded. A helical membrane pass occupies residues Phe81–Ile101. At Trp102 to Lys218 the chain is on the cytoplasmic side. The tract at residues Ser160 to Pro192 is disordered. Over residues Arg182 to Pro192 the composition is skewed to basic and acidic residues.

Gla residues are produced after subsequent post-translational modifications of glutamate by a vitamin K-dependent gamma-carboxylase.

It localises to the membrane. In Bos taurus (Bovine), this protein is Transmembrane gamma-carboxyglutamic acid protein 1 (PRRG1).